The sequence spans 245 residues: Ribonuclease 3 (245 aa).

Positions 24–146 (YTVFSQKLGY…IIGAIYLESG (123 aa)) constitute an RNase III domain. Glu59 is a Mg(2+) binding site. The active site involves Asp63. Positions 132 and 135 each coordinate Mg(2+). Glu135 is a catalytic residue. The DRBM domain maps to 173–243 (DPKTLLQEYL…ARRAYKLAVV (71 aa)).

This sequence belongs to the ribonuclease III family. In terms of assembly, homodimer. The cofactor is Mg(2+).

Its subcellular location is the cytoplasm. It carries out the reaction Endonucleolytic cleavage to 5'-phosphomonoester.. Its function is as follows. Digests double-stranded RNA. Involved in the processing of primary rRNA transcript to yield the immediate precursors to the large and small rRNAs (23S and 16S). Processes some mRNAs, and tRNAs when they are encoded in the rRNA operon. Processes pre-crRNA and tracrRNA of type II CRISPR loci if present in the organism. The polypeptide is Ribonuclease 3 (Nitrosomonas eutropha (strain DSM 101675 / C91 / Nm57)).